A 181-amino-acid polypeptide reads, in one-letter code: Adenylate kinase (181 aa).

10-15 (GAGKGT) contributes to the ATP binding site. The tract at residues 30–59 (STGDLFRANISQQTPLGREAQKYMDAGDLV) is NMP. Residues Thr-31, Arg-36, 57–59 (DLV), 85–88 (GYPR), and Gln-92 each bind AMP. The segment at 126–132 (ARGRNDD) is LID. ATP is bound at residue Arg-127. The AMP site is built by Arg-129 and Arg-140. Gly-166 lines the ATP pocket.

The protein belongs to the adenylate kinase family. Monomer.

The protein localises to the cytoplasm. The catalysed reaction is AMP + ATP = 2 ADP. It functions in the pathway purine metabolism; AMP biosynthesis via salvage pathway; AMP from ADP: step 1/1. In terms of biological role, catalyzes the reversible transfer of the terminal phosphate group between ATP and AMP. Plays an important role in cellular energy homeostasis and in adenine nucleotide metabolism. The chain is Adenylate kinase from Nocardia farcinica (strain IFM 10152).